A 242-amino-acid polypeptide reads, in one-letter code: UDP-2,3-diacylglucosamine hydrolase (242 aa).

Mn(2+) contacts are provided by D8, H10, D41, N79, and H114. Substrate is bound at residue 79–80 (NR). The substrate site is built by D122, K164, K167, and H195. Residues H195 and H197 each contribute to the Mn(2+) site.

Belongs to the LpxH family. Requires Mn(2+) as cofactor.

The protein localises to the cell inner membrane. It carries out the reaction UDP-2-N,3-O-bis[(3R)-3-hydroxytetradecanoyl]-alpha-D-glucosamine + H2O = 2-N,3-O-bis[(3R)-3-hydroxytetradecanoyl]-alpha-D-glucosaminyl 1-phosphate + UMP + 2 H(+). The protein operates within glycolipid biosynthesis; lipid IV(A) biosynthesis; lipid IV(A) from (3R)-3-hydroxytetradecanoyl-[acyl-carrier-protein] and UDP-N-acetyl-alpha-D-glucosamine: step 4/6. Functionally, hydrolyzes the pyrophosphate bond of UDP-2,3-diacylglucosamine to yield 2,3-diacylglucosamine 1-phosphate (lipid X) and UMP by catalyzing the attack of water at the alpha-P atom. Involved in the biosynthesis of lipid A, a phosphorylated glycolipid that anchors the lipopolysaccharide to the outer membrane of the cell. This chain is UDP-2,3-diacylglucosamine hydrolase, found in Vibrio cholerae serotype O1 (strain ATCC 39315 / El Tor Inaba N16961).